The following is a 133-amino-acid chain: Large ribosomal subunit protein uL16c (133 aa).

Belongs to the universal ribosomal protein uL16 family. Part of the 50S ribosomal subunit.

It localises to the plastid. The polypeptide is Large ribosomal subunit protein uL16c (Euglena longa (Euglenophycean alga)).